Here is a 586-residue protein sequence, read N- to C-terminus: Protein HOL1 (586 aa).

Over 1–66 the chain is Extracellular; the sequence is MDKYTNRDHP…NWSSWRKLAH (66 aa). Residues 67 to 87 traverse the membrane as a helical segment; sequence FGLMAFITAFTAATSNDAGAA. Residues 88–103 lie on the Cytoplasmic side of the membrane; the sequence is QDSLNEIYGISYDSMN. The chain crosses the membrane as a helical span at residues 104–124; the sequence is TGAGVLFLGIGWSTLFLAPFA. The Extracellular portion of the chain corresponds to 125–130; that stretch reads NLYGRK. The helical transmembrane segment at 131-151 threads the bilayer; sequence ITYIVCTTLGLFGALWFALAK. The Cytoplasmic segment spans residues 152–189; the sequence is RTSDTIWSQLFVGISESCAEAQVQLSLSDIFFQHQLGS. The helical transmembrane segment at 190 to 210 threads the bilayer; the sequence is VLTVYIMCTSIGTFLGPLIAG. Over 211-219 the chain is Extracellular; sequence YISAFTNFR. A helical transmembrane segment spans residues 220 to 240; the sequence is WVGWVAVIISGGLLITIIFGC. Residues 241-362 lie on the Cytoplasmic side of the membrane; that stretch reads EETYFDRGQY…YFKYLKINLR (122 aa). A helical transmembrane segment spans residues 363-383; the sequence is MFLFPPVWLSGMFWGIQDVFL. The Extracellular segment spans residues 384–413; that stretch reads TFYLTTQESAYYEPPWNYSDFGVAIMNVPT. The chain crosses the membrane as a helical span at residues 414 to 434; it reads LIGAVIGCICAGIVSDYFVLW. The Cytoplasmic segment spans residues 435–448; sequence MARHNRGILEAEFR. Residues 449–469 form a helical membrane-spanning segment; that stretch reads LYFSIATAIIGPAGLLMFGIG. Residues 470 to 477 are Extracellular-facing; that stretch reads TARQWPWQ. Residues 478–498 traverse the membrane as a helical segment; it reads AIYVGLGFVGFAWGCSGDIAM. Residues 499 to 508 lie on the Cytoplasmic side of the membrane; the sequence is AYLMDCYPDM. The helical transmembrane segment at 509–529 threads the bilayer; it reads VLEGMVCTAIINNTISCIFTF. Over 530–544 the chain is Extracellular; the sequence is TCSDWLAASGTENTY. The chain crosses the membrane as a helical span at residues 545 to 565; that stretch reads IALAVINFGITAFALPMYYYG. The Cytoplasmic portion of the chain corresponds to 566–586; the sequence is KRIRLWTKRWYLQSVNLRDGV.

It localises to the membrane. Functionally, seems to be involved in the uptake of several cations and of histidinol. This chain is Protein HOL1 (HOL1), found in Saccharomyces cerevisiae (strain ATCC 204508 / S288c) (Baker's yeast).